Consider the following 286-residue polypeptide: ATP synthase gamma chain (286 aa).

Belongs to the ATPase gamma chain family. F-type ATPases have 2 components, CF(1) - the catalytic core - and CF(0) - the membrane proton channel. CF(1) has five subunits: alpha(3), beta(3), gamma(1), delta(1), epsilon(1). CF(0) has three main subunits: a, b and c.

It localises to the cell inner membrane. Its function is as follows. Produces ATP from ADP in the presence of a proton gradient across the membrane. The gamma chain is believed to be important in regulating ATPase activity and the flow of protons through the CF(0) complex. The chain is ATP synthase gamma chain from Shewanella putrefaciens (strain CN-32 / ATCC BAA-453).